Consider the following 510-residue polypeptide: Probable cytosol aminopeptidase (510 aa).

Positions 272 and 277 each coordinate Mn(2+). K284 is a catalytic residue. 3 residues coordinate Mn(2+): D296, D355, and E357. R359 is a catalytic residue.

Belongs to the peptidase M17 family. Mn(2+) serves as cofactor.

It localises to the cytoplasm. The enzyme catalyses Release of an N-terminal amino acid, Xaa-|-Yaa-, in which Xaa is preferably Leu, but may be other amino acids including Pro although not Arg or Lys, and Yaa may be Pro. Amino acid amides and methyl esters are also readily hydrolyzed, but rates on arylamides are exceedingly low.. It catalyses the reaction Release of an N-terminal amino acid, preferentially leucine, but not glutamic or aspartic acids.. In terms of biological role, presumably involved in the processing and regular turnover of intracellular proteins. Catalyzes the removal of unsubstituted N-terminal amino acids from various peptides. In Synechococcus sp. (strain JA-3-3Ab) (Cyanobacteria bacterium Yellowstone A-Prime), this protein is Probable cytosol aminopeptidase.